The sequence spans 489 residues: 3-octaprenyl-4-hydroxybenzoate carboxy-lyase (489 aa).

Asparagine 172 provides a ligand contact to Mn(2+). Prenylated FMN is bound by residues 175–177 (IYR), 189–191 (RWL), and 194–195 (RG). Glutamate 238 provides a ligand contact to Mn(2+). Catalysis depends on aspartate 287, which acts as the Proton donor.

The protein belongs to the UbiD family. Homohexamer. Prenylated FMN serves as cofactor. It depends on Mn(2+) as a cofactor.

Its subcellular location is the cell membrane. The enzyme catalyses a 4-hydroxy-3-(all-trans-polyprenyl)benzoate + H(+) = a 2-(all-trans-polyprenyl)phenol + CO2. Its pathway is cofactor biosynthesis; ubiquinone biosynthesis. Functionally, catalyzes the decarboxylation of 3-octaprenyl-4-hydroxy benzoate to 2-octaprenylphenol, an intermediate step in ubiquinone biosynthesis. This Glaesserella parasuis serovar 5 (strain SH0165) (Haemophilus parasuis) protein is 3-octaprenyl-4-hydroxybenzoate carboxy-lyase.